A 412-amino-acid polypeptide reads, in one-letter code: Polyferredoxin protein MvhB (412 aa).

12 consecutive 4Fe-4S ferredoxin-type domains span residues 2–29 (IIVN…VTPE), 30–57 (DVIY…LEDL), 67–96 (GRIV…LDEG), 97–127 (KVKK…VEGI), 138–166 (EGPI…LDKV), 168–197 (GVIE…ISGR), 207–236 (KKFE…PRTS), 238–266 (LTVE…LEVE), 276–305 (EGLV…VVTK), 314–345 (EKVD…LVDM), 357–386 (KRVQ…LTDE), and 385–412 (DEKV…LSLK). [4Fe-4S] cluster is bound by residues cysteine 9, cysteine 12, cysteine 15, and cysteine 19. The [4Fe-4S] cluster site is built by cysteine 76, cysteine 79, cysteine 82, cysteine 86, cysteine 107, cysteine 110, cysteine 113, cysteine 117, cysteine 146, cysteine 149, cysteine 152, cysteine 156, cysteine 177, cysteine 180, cysteine 183, cysteine 187, cysteine 216, cysteine 219, cysteine 222, cysteine 226, cysteine 246, cysteine 249, cysteine 252, and cysteine 256. [4Fe-4S] cluster is bound by residues cysteine 325, cysteine 328, cysteine 331, cysteine 335, cysteine 366, cysteine 369, cysteine 372, cysteine 376, cysteine 394, cysteine 397, cysteine 400, and cysteine 404.

It depends on [4Fe-4S] cluster as a cofactor.

The polypeptide is Polyferredoxin protein MvhB (mvhB) (Methanothermobacter thermautotrophicus (strain ATCC 29096 / DSM 1053 / JCM 10044 / NBRC 100330 / Delta H) (Methanobacterium thermoautotrophicum)).